Here is a 166-residue protein sequence, read N- to C-terminus: NAD(P)H-quinone oxidoreductase subunit I, chloroplastic (166 aa).

2 consecutive 4Fe-4S ferredoxin-type domains span residues 55-84 and 95-124; these read GRIH…VDWK and LNYS…MTEE. Residues cysteine 64, cysteine 67, cysteine 70, cysteine 74, cysteine 104, cysteine 107, cysteine 110, and cysteine 114 each coordinate [4Fe-4S] cluster.

This sequence belongs to the complex I 23 kDa subunit family. As to quaternary structure, NDH is composed of at least 16 different subunits, 5 of which are encoded in the nucleus. [4Fe-4S] cluster is required as a cofactor.

The protein localises to the plastid. It is found in the chloroplast thylakoid membrane. The enzyme catalyses a plastoquinone + NADH + (n+1) H(+)(in) = a plastoquinol + NAD(+) + n H(+)(out). It catalyses the reaction a plastoquinone + NADPH + (n+1) H(+)(in) = a plastoquinol + NADP(+) + n H(+)(out). Its function is as follows. NDH shuttles electrons from NAD(P)H:plastoquinone, via FMN and iron-sulfur (Fe-S) centers, to quinones in the photosynthetic chain and possibly in a chloroplast respiratory chain. The immediate electron acceptor for the enzyme in this species is believed to be plastoquinone. Couples the redox reaction to proton translocation, and thus conserves the redox energy in a proton gradient. The polypeptide is NAD(P)H-quinone oxidoreductase subunit I, chloroplastic (Palafoxia arida (Spanish needles)).